We begin with the raw amino-acid sequence, 144 residues long: Large ribosomal subunit protein uL15 (144 aa).

Positions 1 to 53 (MFLNTIKPGEGAKHAKRRVGRGIGSGLGKTAGRGHKGQKSRSGGFHKVGFEGG) are disordered. Residues 21 to 31 (RGIGSGLGKTA) show a composition bias toward gly residues.

Belongs to the universal ribosomal protein uL15 family. As to quaternary structure, part of the 50S ribosomal subunit.

Functionally, binds to the 23S rRNA. The protein is Large ribosomal subunit protein uL15 of Laribacter hongkongensis (strain HLHK9).